A 231-amino-acid chain; its full sequence is NADH-ubiquinone oxidoreductase chain 4 (231 aa).

The next 6 membrane-spanning stretches (helical) occupy residues 1–21, 34–54, 61–80, 84–106, 128–148, and 169–189; these read PIAG…YGII, MFLP…LTCL, SLIA…AIII, WGLT…LFCL, ILPM…ATPP, and TIIL…HMFL.

It belongs to the complex I subunit 4 family.

The protein localises to the mitochondrion membrane. It catalyses the reaction a ubiquinone + NADH + 5 H(+)(in) = a ubiquinol + NAD(+) + 4 H(+)(out). Core subunit of the mitochondrial membrane respiratory chain NADH dehydrogenase (Complex I) that is believed to belong to the minimal assembly required for catalysis. Complex I functions in the transfer of electrons from NADH to the respiratory chain. The immediate electron acceptor for the enzyme is believed to be ubiquinone. In Atropoides picadoi (Picado's pit viper), this protein is NADH-ubiquinone oxidoreductase chain 4 (MT-ND4).